Here is a 156-residue protein sequence, read N- to C-terminus: Ribosomal RNA large subunit methyltransferase H (156 aa).

S-adenosyl-L-methionine-binding positions include leucine 73, glycine 104, and 123–128 (IGPLTL).

It belongs to the RNA methyltransferase RlmH family. Homodimer.

It is found in the cytoplasm. The catalysed reaction is pseudouridine(1915) in 23S rRNA + S-adenosyl-L-methionine = N(3)-methylpseudouridine(1915) in 23S rRNA + S-adenosyl-L-homocysteine + H(+). Functionally, specifically methylates the pseudouridine at position 1915 (m3Psi1915) in 23S rRNA. The chain is Ribosomal RNA large subunit methyltransferase H from Stenotrophomonas maltophilia (strain R551-3).